The chain runs to 281 residues: NAD kinase (281 aa).

Residue D66 is the Proton acceptor of the active site. NAD(+)-binding positions include 66–67 (DG), 137–138 (ND), R148, R165, D167, and 178–183 (TAYSMS).

It belongs to the NAD kinase family. It depends on a divalent metal cation as a cofactor.

The protein resides in the cytoplasm. The enzyme catalyses NAD(+) + ATP = ADP + NADP(+) + H(+). Functionally, involved in the regulation of the intracellular balance of NAD and NADP, and is a key enzyme in the biosynthesis of NADP. Catalyzes specifically the phosphorylation on 2'-hydroxyl of the adenosine moiety of NAD to yield NADP. This is NAD kinase from Chlorobium phaeovibrioides (strain DSM 265 / 1930) (Prosthecochloris vibrioformis (strain DSM 265)).